The following is a 208-amino-acid chain: 3-isopropylmalate dehydratase small subunit 2 (208 aa).

A disordered region spans residues 163-208; it reads EGERLDNASTSAGHGHAGTPLGDDPAKEDGPRPEQASGHQKEEHHA.

This sequence belongs to the LeuD family. LeuD type 2 subfamily. As to quaternary structure, heterodimer of LeuC and LeuD.

The enzyme catalyses (2R,3S)-3-isopropylmalate = (2S)-2-isopropylmalate. It functions in the pathway amino-acid biosynthesis; L-leucine biosynthesis; L-leucine from 3-methyl-2-oxobutanoate: step 2/4. In terms of biological role, catalyzes the isomerization between 2-isopropylmalate and 3-isopropylmalate, via the formation of 2-isopropylmaleate. This chain is 3-isopropylmalate dehydratase small subunit 2 (leuD2), found in Deinococcus radiodurans (strain ATCC 13939 / DSM 20539 / JCM 16871 / CCUG 27074 / LMG 4051 / NBRC 15346 / NCIMB 9279 / VKM B-1422 / R1).